The following is a 641-amino-acid chain: WW domain-binding protein 11 (641 aa).

Positions 1–11 (MGRRSTSSTKS) are enriched in polar residues. The tract at residues 1 to 37 (MGRRSTSSTKSGKFMNPTDQARKEARKRELKKNKKQR) is disordered. Residues 1 to 45 (MGRRSTSSTKSGKFMNPTDQARKEARKRELKKNKKQRMMVRAAVL) form a required for nuclear import region. An N6-acetyllysine modification is found at Lys-13. Residues 28–37 (RELKKNKKQR) are compositionally biased toward basic residues. Positions 75 to 133 (EKVLKDKRKKLRETFERILRLYEKENPDIYKELRKLEVEYEQKRAQLSQYFDAVKNAQH) form a coiled coil. A Phosphoserine modification is found at Ser-181. The segment at 186-213 (LGHGVPRLPPGRKPPGPPPGPPPPQVVQ) is disordered. An Omega-N-methylarginine modification is found at Arg-192. Residues 192 to 210 (RLPPGRKPPGPPPGPPPPQ) show a composition bias toward pro residues. The interval 217–221 (RKVGF) is interaction with PP1. Tyr-236 carries the post-translational modification Phosphotyrosine. Residues 236 to 552 (YSPELAQRGH…RPKADDTSAA (317 aa)) form a disordered region. Phosphoserine is present on Ser-237. Acidic residues predominate over residues 253–263 (SEDDGYPEDMD). The segment covering 276-304 (TDKSDGESDGDEFVHRDNGERDNNEEKKS) has biased composition (basic and acidic residues). Ser-279 and Ser-283 each carry phosphoserine. The tract at residues 306–310 (LSVRF) is interaction with PP1. Over residues 351 to 365 (EFSEDDDEDDSDDSE) the composition is skewed to acidic residues. Ser-353, Ser-361, and Ser-364 each carry phosphoserine. The span at 366 to 380 (AEKQSQKQHKEESHS) shows a compositional bias: basic and acidic residues. Over residues 386 to 404 (ASSQQQAPPQSVPPSQIQA) the composition is skewed to low complexity. Pro residues-rich tracts occupy residues 405-447 (PPMP…PPGM), 456-504 (RLLP…PPRP), and 510-530 (PLVPPLGPAPPGLFPPAPLPN). A PGR motif is present at residues 455-466 (PRLLPPGPPPGR). Lys-557 is covalently cross-linked (Glycyl lysine isopeptide (Lys-Gly) (interchain with G-Cter in SUMO2)). At Lys-565 the chain carries N6-acetyllysine. Residue Lys-572 forms a Glycyl lysine isopeptide (Lys-Gly) (interchain with G-Cter in SUMO2) linkage. Residues 587–623 (RENKGATAAPQRKSEDDSAVPLAKAAPKSGPSVPVSV) are disordered. Phosphoserine is present on Ser-600.

As to quaternary structure, interacts with PPP1CA, PPP1CB and PPP1CC. Interacts via the PGR motif with PQBP1 in the nucleus. Interacts with the WW domains of WBP4. Ubiquitous. Highly expressed in the heart, pancreas, kidney skeletal muscle, placenta and brain (at protein level). Weakly expressed in liver and lung.

Its subcellular location is the nucleus. The protein localises to the cytoplasm. In terms of biological role, activates pre-mRNA splicing. May inhibit PP1 phosphatase activity. In Homo sapiens (Human), this protein is WW domain-binding protein 11.